Reading from the N-terminus, the 67-residue chain is MKAKIHPKYHQAKARCACGNEFEVGSTSENIRVEICSKCHPFYTGAKGRLVDTTGRVDRFKKKYGLS.

The Zn(2+) site is built by C16, C18, C36, and C39.

This sequence belongs to the bacterial ribosomal protein bL31 family. Type A subfamily. As to quaternary structure, part of the 50S ribosomal subunit. The cofactor is Zn(2+).

Binds the 23S rRNA. The protein is Large ribosomal subunit protein bL31 of Syntrophomonas wolfei subsp. wolfei (strain DSM 2245B / Goettingen).